The chain runs to 117 residues: Fluoride-specific ion channel FluC 2 (117 aa).

Transmembrane regions (helical) follow at residues 1 to 21, 33 to 53, 60 to 80, and 95 to 115; these read MISI…RSAI, LPIA…LTIG, WFPA…STLA, and LFLN…YIGY. 2 residues coordinate Na(+): G71 and T74.

The protein belongs to the fluoride channel Fluc/FEX (TC 1.A.43) family.

It is found in the cell membrane. It carries out the reaction fluoride(in) = fluoride(out). Its activity is regulated as follows. Na(+) is not transported, but it plays an essential structural role and its presence is essential for fluoride channel function. Fluoride-specific ion channel. Important for reducing fluoride concentration in the cell, thus reducing its toxicity. This is Fluoride-specific ion channel FluC 2 from Staphylococcus aureus (strain COL).